Reading from the N-terminus, the 563-residue chain is Arginine--tRNA ligase (563 aa).

A 'HIGH' region motif is present at residues 120 to 130 (PNIAKPFHVGH).

This sequence belongs to the class-I aminoacyl-tRNA synthetase family. In terms of assembly, monomer.

It localises to the cytoplasm. The catalysed reaction is tRNA(Arg) + L-arginine + ATP = L-arginyl-tRNA(Arg) + AMP + diphosphate. The sequence is that of Arginine--tRNA ligase from Clostridium acetobutylicum (strain ATCC 824 / DSM 792 / JCM 1419 / IAM 19013 / LMG 5710 / NBRC 13948 / NRRL B-527 / VKM B-1787 / 2291 / W).